Here is a 239-residue protein sequence, read N- to C-terminus: Protein Thf1 (239 aa).

Residues glutamate 183 to arginine 219 adopt a coiled-coil conformation. A compositionally biased stretch (basic and acidic residues) spans lysine 211–glutamine 221. A disordered region spans residues lysine 211–glycine 239.

The protein belongs to the THF1 family.

In terms of biological role, may be involved in photosynthetic membrane biogenesis. In Synechococcus sp. (strain JA-3-3Ab) (Cyanobacteria bacterium Yellowstone A-Prime), this protein is Protein Thf1.